The following is a 134-amino-acid chain: Profilin-4 (134 aa).

An intrachain disulfide couples Cys13 to Cys118. Residues 84 to 100 carry the Involved in PIP2 interaction motif; it reads AVIRGKKGSGGITIKKT. Thr114 is modified (phosphothreonine).

The protein belongs to the profilin family. Occurs in many kinds of cells as a complex with monomeric actin in a 1:1 ratio. In terms of processing, phosphorylated by MAP kinases.

It is found in the cytoplasm. It localises to the cytoskeleton. Functionally, binds to actin and affects the structure of the cytoskeleton. At high concentrations, profilin prevents the polymerization of actin, whereas it enhances it at low concentrations. In Olea europaea (Common olive), this protein is Profilin-4.